A 530-amino-acid polypeptide reads, in one-letter code: ATP synthase subunit alpha (530 aa).

172–179 (GDRQTGKT) provides a ligand contact to ATP.

It belongs to the ATPase alpha/beta chains family. In terms of assembly, F-type ATPases have 2 components, CF(1) - the catalytic core - and CF(0) - the membrane proton channel. CF(1) has five subunits: alpha(3), beta(3), gamma(1), delta(1), epsilon(1). CF(0) has three main subunits: a(1), b(2) and c(9-12). The alpha and beta chains form an alternating ring which encloses part of the gamma chain. CF(1) is attached to CF(0) by a central stalk formed by the gamma and epsilon chains, while a peripheral stalk is formed by the delta and b chains.

The protein resides in the cell inner membrane. It carries out the reaction ATP + H2O + 4 H(+)(in) = ADP + phosphate + 5 H(+)(out). Produces ATP from ADP in the presence of a proton gradient across the membrane. The alpha chain is a regulatory subunit. The sequence is that of ATP synthase subunit alpha from Phocaeicola vulgatus (strain ATCC 8482 / DSM 1447 / JCM 5826 / CCUG 4940 / NBRC 14291 / NCTC 11154) (Bacteroides vulgatus).